Reading from the N-terminus, the 80-residue chain is Three-finger toxin MALT0059C (80 aa).

The first 21 residues, 1-21 (MRTLLLTLVVVTIVCLDLGNS), serve as a signal peptide directing secretion. Intrachain disulfides connect Cys-24-Cys-41, Cys-35-Cys-60, Cys-64-Cys-72, and Cys-73-Cys-78.

It belongs to the three-finger toxin family. Short-chain subfamily. In terms of tissue distribution, expressed by the venom gland.

Its subcellular location is the secreted. In terms of biological role, neurotoxin. Blocks muscular nicotinic acetylcholine receptors (nAChR). This chain is Three-finger toxin MALT0059C, found in Micrurus altirostris (Uruguayan coral snake).